The sequence spans 99 residues: Putative gene 45 protein (99 aa).

In Bacillus phage SP01 (Bacteriophage SP01), this protein is Putative gene 45 protein (45).